The chain runs to 690 residues: Serotransferrin-1 (690 aa).

Positions M1 to A18 are cleaved as a signal peptide. 2 consecutive Transferrin-like domains span residues V25–K329 and I340–K669. A disulfide bridge connects residues C28 and C50. Residues D74 and Y104 each contribute to the Fe(3+) site. 3 cysteine pairs are disulfide-bonded: C127/C207, C172/C186, and C235/C249. Hydrogencarbonate is bound by residues T129, S134, G136, and W137. N169 is a glycosylation site (N-linked (GlcNAc...) asparagine). Y201 contacts Fe(3+). H257 contributes to the Fe(3+) binding site. 2 disulfide bridges follow: C343–C379 and C353–C370. Fe(3+)-binding residues include D394 and Y428. Cystine bridges form between C404/C681, C419/C642, C451/C529, C475/C670, C485/C499, C496/C512, and C569/C583. Positions 453, 457, 459, and 460 each coordinate hydrogencarbonate. Residue Y523 coordinates Fe(3+). H591 provides a ligand contact to Fe(3+).

Belongs to the transferrin family. As to quaternary structure, monomer. As to expression, abundant in liver and serum with smaller amounts found in the stomach and kidney.

The protein localises to the secreted. Functionally, transferrins are iron binding transport proteins which can bind two Fe(3+) ions in association with the binding of an anion, usually bicarbonate. It is responsible for the transport of iron from sites of absorption and heme degradation to those of storage and utilization. Serum transferrin may also have a further role in stimulating cell proliferation. The sequence is that of Serotransferrin-1 (tf1) from Salmo salar (Atlantic salmon).